A 127-amino-acid chain; its full sequence is uncharacterized protein (127 aa).

Positions 1–23 (MAGVRARAPLPLALLLSLPAAPG) are cleaved as a signal peptide. Residues 43–127 (CFEVGLRKPP…ACPPRAPLWR (85 aa)) form a disordered region. The segment covering 59–70 (PPSFSSGSSRPL) has biased composition (low complexity).

The protein localises to the secreted. This is an uncharacterized protein from Homo sapiens (Human).